The primary structure comprises 598 residues: Arginine--tRNA ligase (598 aa).

The 'HIGH' region motif lies at alanine 139–histidine 149.

Belongs to the class-I aminoacyl-tRNA synthetase family. In terms of assembly, monomer.

The protein resides in the cytoplasm. It catalyses the reaction tRNA(Arg) + L-arginine + ATP = L-arginyl-tRNA(Arg) + AMP + diphosphate. The sequence is that of Arginine--tRNA ligase from Bradyrhizobium sp. (strain ORS 278).